The following is a 2094-amino-acid chain: Non-reducing polyketide synthase ustP (2094 aa).

An N-terminal acylcarrier protein transacylase (SAT) domain region spans residues 9 to 243 (VFGDLSVPYH…GKIQVGGLFH (235 aa)). Residues 357 to 377 (NTAGVDSSSRGSGHADAEKQP) form a disordered region. Positions 379-813 (RSKIAIIGFS…GGNSSVLVED (435 aa)) constitute a Ketosynthase family 3 (KS3) domain. Active-site for beta-ketoacyl synthase activity residues include C551, H686, and H727. The interval 914 to 1227 (FSFTGQGSQY…EDDCKIFTPA (314 aa)) is malonyl-CoA:ACP transacylase (MAT) domain. S1004 (for acyl/malonyl transferase activity) is an active-site residue. The product template (PT) domain stretch occupies residues 1305–1629 (TTSVQYITAE…QRKVLDLVLP (325 aa)). The N-terminal hotdog fold stretch occupies residues 1308 to 1445 (VQYITAESYG…CSGFFTDKSR (138 aa)). A PKS/mFAS DH domain is found at 1308-1625 (VQYITAESYG…FAAVQRKVLD (318 aa)). H1341 serves as the catalytic Proton acceptor; for dehydratase activity. The segment at 1473 to 1625 (GSVHMIKTGM…FAAVQRKVLD (153 aa)) is C-terminal hotdog fold. D1536 functions as the Proton donor; for dehydratase activity in the catalytic mechanism. The segment covering 1644 to 1671 (AAAAPSQRQQQQQQQQQQQPAQPVAASQ) has biased composition (low complexity). The tract at residues 1644–1689 (AAAAPSQRQQQQQQQQQQQPAQPVAASQESGMDDMPPTLVPSEKKD) is disordered. The Carrier domain maps to 1689–1763 (DVPSEKLKVI…ELVRHILGSS (75 aa)). An O-(pantetheine 4'-phosphoryl)serine modification is found at S1723. Over residues 1762 to 1778 (SSTPSSDSGPATPSITP) the composition is skewed to polar residues. The segment at 1762-1782 (SSTPSSDSGPATPSITPLQEP) is disordered. The tract at residues 1844–2069 (KVWLFPDGSG…GVVEGAHHFS (226 aa)) is claisen cyclase domain. The For Claisen cyclase activity role is filled by S1916.

The enzyme catalyses 6 malonyl-CoA + acetyl-CoA + 6 H(+) = naphtopyrone YWA1 + 6 CO2 + 7 CoA + H2O. The protein operates within secondary metabolite biosynthesis. Functionally, non-reducing polyketide synthase; part of the gene cluster that mediates the biosynthesis of ustilaginoidins, dimeric gamma-naphthopyrones isolated from different fungal species. The first step in the biosynthesis of ustilaginoidins is the production of gamma-naphthopyrone precursor YWA1 by the non-reducing polyketide synthase ustP, via condensation of one acetyl-CoA starter unit with 6 malonyl-CoA units. YWA1 is then probably substrate of the ustZ to yield norrubrofusarin via a dehydration reaction. A key enzyme in the biosynthetic pathway is the laccase ustL, which catalyzes the oxidative dimerization of norrubrofusarin to ustilaginoidin A. It can produce the M- and P-atropisomers in varying amounts, depending on the reaction conditions. For the biosynthesis of 3-methylustilaginoid in derivatives such as chaetochromin A, a methylated derivative of YWA1 is required. The C-methylation is considered to be catalyzed by ustM, the phosphopantetheine attachment site of which indicates that it acts on the growing polyketide chain before release of the product. For the biosynthesis of chaetochromin A, it is assumed that saturation of the D2 double bond takes place before dimerization, and is probably catalyzed by an external reductase because no candidate gene was identified within the cluster. This chain is Non-reducing polyketide synthase ustP, found in Ustilaginoidea virens (Rice false smut fungus).